The following is an 82-amino-acid chain: Diphthamide biosynthesis protein 3 (82 aa).

The DPH-type MB domain maps to 4 to 60 (FHDEVEIEDFQYDEDSETYFYPCPCGDNFAITKEDLENGEDVATCPSCSLIIKVIYD). Residues Cys-26, Cys-28, Cys-48, and Cys-51 each contribute to the Fe cation site.

Belongs to the DPH3 family. As to quaternary structure, component of the 2-(3-amino-3-carboxypropyl)histidine synthase complex composed of DPH1, DPH2, DPH3 and a NADH-dependent reductase. Interacts with SERGEF. Requires Fe(2+) as cofactor. Widely expressed with highest levels in heart, liver, kidney and testis.

Its subcellular location is the cytoplasm. The protein resides in the nucleus. It catalyses the reaction [3Fe-4S](1+)-[protein] + Fe(2+)-[Dph3] = [3Fe-4S](0)-[protein] + Fe(3+)-[Dph3]. It carries out the reaction 2 [3Fe-4S](0)-[protein] + 2 Fe(2+)-[Dph3] + NADH = 2 [4Fe-4S](1+)-[protein] + 2 [Dph3] + NAD(+) + H(+). The protein operates within protein modification; peptidyl-diphthamide biosynthesis. Functionally, required for the first step of diphthamide biosynthesis, a post-translational modification of histidine which occurs in elongation factor 2. DPH1 and DPH2 transfer a 3-amino-3-carboxypropyl (ACP) group from S-adenosyl-L-methionine (SAM) to a histidine residue, the reaction is assisted by a reduction system comprising DPH3 and a NADH-dependent reductase. Acts as an electron donor to reduce the Fe-S cluster in DPH1-DPH2 keeping the [4Fe-4S] clusters in the active and reduced state. Restores iron to DPH1-DPH2 iron-sulfur clusters which have degraded from [4Fe-4S] to [3Fe-4S] by donating an iron atom to reform [4Fe-4S] clusters, in a manner dependent on the presence of elongation factor 2 and SAM. Associates with the elongator complex and is required for tRNA Wobble base modifications mediated by the elongator complex. The elongator complex is required for multiple tRNA modifications, including mcm5U (5-methoxycarbonylmethyl uridine), mcm5s 2U (5-methoxycarbonylmethyl-2-thiouridine), and ncm5U (5-carbamoylmethyl uridine). This chain is Diphthamide biosynthesis protein 3, found in Mus musculus (Mouse).